Reading from the N-terminus, the 1233-residue chain is DNA-directed RNA polymerase subunit beta' (1233 aa).

Zn(2+)-binding residues include cysteine 61, cysteine 63, cysteine 76, and cysteine 79. The Mg(2+) site is built by aspartate 455, aspartate 457, and aspartate 459. Residues cysteine 824, cysteine 898, cysteine 905, and cysteine 908 each coordinate Zn(2+). The segment covering 1211 to 1220 has biased composition (basic and acidic residues); it reads ELQKAFDKEP. The tract at residues 1211–1233 is disordered; sequence ELQKAFDKEPASSTGNKASNSAK. The span at 1221–1233 shows a compositional bias: polar residues; that stretch reads ASSTGNKASNSAK.

The protein belongs to the RNA polymerase beta' chain family. The RNAP catalytic core consists of 2 alpha, 1 beta, 1 beta' and 1 omega subunit. When a sigma factor is associated with the core the holoenzyme is formed, which can initiate transcription. Mg(2+) is required as a cofactor. The cofactor is Zn(2+).

It carries out the reaction RNA(n) + a ribonucleoside 5'-triphosphate = RNA(n+1) + diphosphate. In terms of biological role, DNA-dependent RNA polymerase catalyzes the transcription of DNA into RNA using the four ribonucleoside triphosphates as substrates. In Oenococcus oeni (strain ATCC BAA-331 / PSU-1), this protein is DNA-directed RNA polymerase subunit beta'.